The sequence spans 638 residues: Chaperone protein DnaK (638 aa).

Residue threonine 198 is modified to Phosphothreonine; by autocatalysis. A disordered region spans residues 598-638; that stretch reads YEASQKEAAEADAKADAAKDSDVVDADFEEIDEDDDKKKSA. Positions 601 to 619 are enriched in basic and acidic residues; it reads SQKEAAEADAKADAAKDSD. Residues 620-632 are compositionally biased toward acidic residues; sequence VVDADFEEIDEDD.

The protein belongs to the heat shock protein 70 family.

In terms of biological role, acts as a chaperone. The polypeptide is Chaperone protein DnaK (Mesorhizobium japonicum (strain LMG 29417 / CECT 9101 / MAFF 303099) (Mesorhizobium loti (strain MAFF 303099))).